Here is a 257-residue protein sequence, read N- to C-terminus: Cobalt transport protein CbiM (257 aa).

Residues 1–33 form the signal peptide; the sequence is MVKPTQAKRYASLGAIALLTTSLVVASPNPALA. 6 helical membrane passes run 39–59, 74–94, 117–137, 138–158, 171–191, and 214–234; these read GFLPLGWAVGWWLAFLPFLAW, SVLLVALAGAYAFVVSSLKIP, LMAVLGTLVLLFQSLLIAHGG, LTTLGANAFSMAVVGPWLAWL, AIALFAASFISNVGTYTLTSL, and LFAVTQIPLAISEGLLTVLVW.

It belongs to the CbiM family. As to quaternary structure, forms an energy-coupling factor (ECF) transporter complex composed of an ATP-binding protein (A component, CbiO), a transmembrane protein (T component, CbiQ) and 2 possible substrate-capture proteins (S components, CbiM and CbiN) of unknown stoichimetry.

The protein resides in the cell inner membrane. It participates in cofactor biosynthesis; adenosylcobalamin biosynthesis. Its function is as follows. Part of the energy-coupling factor (ECF) transporter complex CbiMNOQ involved in cobalt import. This chain is Cobalt transport protein CbiM, found in Thermosynechococcus vestitus (strain NIES-2133 / IAM M-273 / BP-1).